The following is a 146-amino-acid chain: Large ribosomal subunit protein uL15 (146 aa).

The segment at 1–64 (MELNSIKPAA…MPMHRRLPKR (64 aa)) is disordered. The span at 30–39 (TATKGHKGQK) shows a compositional bias: basic residues.

The protein belongs to the universal ribosomal protein uL15 family. In terms of assembly, part of the 50S ribosomal subunit.

Binds to the 23S rRNA. This is Large ribosomal subunit protein uL15 from Geotalea daltonii (strain DSM 22248 / JCM 15807 / FRC-32) (Geobacter daltonii).